Reading from the N-terminus, the 41-residue chain is Photosystem II reaction center protein Y (41 aa).

The chain crosses the membrane as a helical span at residues 7-25 (VAIVLAPIAVAAGWAAFNI).

This sequence belongs to the PsbY family. As to quaternary structure, PSII is composed of 1 copy each of membrane proteins PsbA, PsbB, PsbC, PsbD, PsbE, PsbF, PsbH, PsbI, PsbJ, PsbK, PsbL, PsbM, PsbT, PsbX, PsbY, PsbZ, Psb30/Ycf12, peripheral proteins PsbO, CyanoQ (PsbQ), PsbU, PsbV and a large number of cofactors. It forms dimeric complexes.

It is found in the cellular thylakoid membrane. Its function is as follows. Loosely associated component of the core of photosystem II (PSII), it is not always seen in crystals. PSII is a light-driven water plastoquinone oxidoreductase, using light energy to abstract electrons from H(2)O, generating a proton gradient subsequently used for ATP formation. The polypeptide is Photosystem II reaction center protein Y (Nostoc sp. (strain PCC 7120 / SAG 25.82 / UTEX 2576)).